Consider the following 780-residue polypeptide: Pumilio domain-containing protein C4G8.03c (780 aa).

3 disordered regions span residues 1-29 (MVNR…LSSY), 298-330 (LSHF…LHSK), and 358-411 (NHHS…GKTV). A compositionally biased stretch (basic and acidic residues) spans 298 to 307 (LSHFPDHLDP). Over residues 311–322 (PSPYQPSSLQPL) the composition is skewed to low complexity. The segment covering 358-382 (NHHSSLSMDNDPTNVSTKNRNNQTV) has biased composition (polar residues). The region spanning 435–778 (EKSDDLSNLL…HILAKLTSST (344 aa)) is the PUM-HD domain. Pumilio repeat units lie at residues 462–497 (GFLG…LFFP), 498–533 (EIRQ…SMLN), 534–569 (GIGE…SLLL), 570–606 (KIII…PLFL), 607–642 (SMEE…RLVN), 643–678 (SIIK…RIIE), 679–714 (KFFG…QMLQ), 715–752 (EFLS…LILR), and 753–780 (SISH…STSS).

This chain is Pumilio domain-containing protein C4G8.03c, found in Schizosaccharomyces pombe (strain 972 / ATCC 24843) (Fission yeast).